Consider the following 695-residue polypeptide: Follicle-stimulating hormone receptor (695 aa).

The signal sequence occupies residues 1-17 (MTFLLVSLLAFLSLGSG). 2 disulfide bridges follow: Cys-18–Cys-25 and Cys-23–Cys-32. One can recognise an LRRNT domain in the interval 18–46 (CHHRICHCWHRVFLCQESKVTEIPSDLPR). Topologically, residues 18 to 366 (CHHRICHCWH…EDIMGYDILR (349 aa)) are extracellular. 9 LRR repeats span residues 49 to 72 (VELR…FGDL), 73 to 97 (EKIE…LSKL), 98 to 118 (HEIR…AFQN), 119 to 143 (LPNL…KIQS), 144 to 169 (LQKV…MGLS), 170 to 192 (FESM…AFNG), 193 to 216 (TQLD…VFQG), 217 to 240 (ASGP…GLEN), and 241 to 259 (IKKL…PSLD). Asn-93 carries N-linked (GlcNAc...) asparagine glycosylation. N-linked (GlcNAc...) asparagine glycosylation is found at Asn-191 and Asn-199. Disulfide bonds link Cys-275–Cys-346, Cys-276–Cys-292, Cys-276–Cys-356, and Cys-292–Cys-338. A glycan (N-linked (GlcNAc...) asparagine) is linked at Asn-293. The residue at position 335 (Tyr-335) is a Sulfotyrosine. Residues 367–387 (VLIWFISILAITGNIIVLMIL) form a helical membrane-spanning segment. Residues 388-398 (ITSQYKLTVPR) are Cytoplasmic-facing. The helical transmembrane segment at 399-419 (FLMCNLAFADLCIGIYLLLIA) threads the bilayer. Topologically, residues 420-444 (SVDIYTKSQYHNYAIDWQTGAGCDA) are extracellular. The helical transmembrane segment at 445–465 (AGFFTVFASELSVYTLTVITL) threads the bilayer. At 466 to 487 (ERWHTITHAMQLECKVQLRHAA) the chain is on the cytoplasmic side. Residues 488 to 508 (IIMLLGWIFAFMVALFPIFGI) form a helical membrane-spanning segment. Residues 509–528 (SSYMKVSICLPMDIDSPLSQ) are Extracellular-facing. Residues 529–550 (LYVMSLLVLNVLAFVVICCCYA) traverse the membrane as a helical segment. The Cytoplasmic portion of the chain corresponds to 551–573 (HIYLTVRNPNIVSSSSDTKIAKR). Residues 574 to 594 (MAMLIFTDFLCMAPISFFAIS) form a helical membrane-spanning segment. The Extracellular segment spans residues 595 to 608 (ASLKVPLITVSKSK). The chain crosses the membrane as a helical span at residues 609–629 (ILLVLFYPINSCANPFLYAIF). Residues 630–695 (TKNFRRDFFI…LIPLRHLAKN (66 aa)) are Cytoplasmic-facing.

It belongs to the G-protein coupled receptor 1 family. FSH/LSH/TSH subfamily. As to quaternary structure, homotrimer. Functions as a homotrimer binding the FSH hormone heterodimer composed of CGA and FSHB. Interacts with ARRB2. Interacts with APPL2; interaction is independent of follicle stimulating hormone stimulation. Post-translationally, N-glycosylated; indirectly required for FSH-binding, possibly via a conformational change that allows high affinity binding of hormone. In terms of processing, sulfated.

The protein resides in the cell membrane. In terms of biological role, g protein-coupled receptor for follitropin, the follicle-stimulating hormone. Through cAMP production activates the downstream PI3K-AKT and ERK1/ERK2 signaling pathways. The protein is Follicle-stimulating hormone receptor (FSHR) of Felis catus (Cat).